The chain runs to 1875 residues: Soluble starch synthase 3a, chloroplastic/amyloplastic (1875 aa).

The N-terminal 49 residues, 1 to 49 (MEMALRPQSLLCPRSRLKVVIRPASSASGGGLAQYFLMTRRYTGSRIVR), are a transit peptide targeting the chloroplast. Residues 1007–1065 (KRELERVATEEAERRRHAEEQQRMGEQRAAEQAAREQAKKEIELKKNKLQNLLSSARTH) adopt a coiled-coil conformation. Positions 1014–1043 (ATEEAERRRHAEEQQRMGEQRAAEQAAREQ) are disordered.

It belongs to the glycosyltransferase 1 family. Bacterial/plant glycogen synthase subfamily. As to expression, expressed in the endosperm.

It is found in the plastid. The protein localises to the chloroplast. It localises to the amyloplast. The enzyme catalyses [(1-&gt;4)-alpha-D-glucosyl](n) + ADP-alpha-D-glucose = [(1-&gt;4)-alpha-D-glucosyl](n+1) + ADP + H(+). Its pathway is glycan biosynthesis; starch biosynthesis. Functionally, involved in starch synthesis in endosperm amyloplasts. Plays an important role in the elongation of amylopectin B chains. The polypeptide is Soluble starch synthase 3a, chloroplastic/amyloplastic (Oryza sativa subsp. japonica (Rice)).